The chain runs to 3411 residues: Genome polyprotein (3411 aa).

Residues 1 to 104 lie on the Cytoplasmic side of the membrane; it reads MSGRKAQGKT…LSSRKRRSHD (104 aa). A hydrophobic; homodimerization of capsid protein C region spans residues 38 to 72; that stretch reads PGPSRGVQGFISFFSFNILTGKKITAHLKRLWKML. Residues 102 to 121 constitute a propeptide, ER anchor for the capsid protein C, removed in mature form by serine protease NS3; the sequence is SHDVLTVQFLILGMLLMAGG. A helical transmembrane segment spans residues 105–125; that stretch reads VLTVQFLILGMLLMAGGVTLV. The Extracellular segment spans residues 126-244; it reads RKNRWLLLNV…GERQLQKIER (119 aa). Residues N134 and N150 are each glycosylated (N-linked (GlcNAc...) asparagine; by host). Residues 245–265 traverse the membrane as a helical segment; it reads WLVRNPFFAVTALAIAYLVGS. At 266–270 the chain is on the cytoplasmic side; sequence NMTQR. Residues 271–285 form a helical membrane-spanning segment; the sequence is VVIALLVLAVGPAYS. Residues 286-730 are Extracellular-facing; that stretch reads AHCIGITDRD…TVFGSAFQGL (445 aa). Disulfide bonds link C288-C315, C345-C401, C345-C406, C359-C390, C377-C401, C377-C406, C467-C568, and C585-C615. The tract at residues 383-396 is fusion peptide; it reads DRGWGNGCGLFGKG. A helical transmembrane segment spans residues 731 to 751; the sequence is FGGLSWITKVIMGAVLIWVGI. Residues 752–757 are Extracellular-facing; that stretch reads NTRNMT. The helical transmembrane segment at 758–778 threads the bilayer; sequence MSMSMILVGVIMMFLSLGVGA. Over 779–1132 the chain is Extracellular; that stretch reads DQGCAINFGK…LVRSWVTAGE (354 aa). 6 cysteine pairs are disulfide-bonded: C782-C793, C833-C921, C957-C1002, C1058-C1107, C1069-C1091, and C1090-C1094. Residues N908 and N986 are each glycosylated (N-linked (GlcNAc...) asparagine; by host). The helical transmembrane segment at 1133–1153 threads the bilayer; the sequence is IHAVPFGLVSMMIAMEVVLRK. The Cytoplasmic segment spans residues 1154 to 1201; that stretch reads RQGPKQMLVGGMVLLGAMLVGQVTLLDLLKLTMAVGLHFHEMNNGGDA. A helical membrane pass occupies residues 1202-1222; it reads MYMALIAAFSIRPGLLIGFGL. Residues 1223–1287 lie on the Lumenal side of the membrane; it reads RTLWSPRERL…ILPLMALLTP (65 aa). Residues 1288–1308 form a helical membrane-spanning segment; sequence VTMAEVRLATMLLCAVVIIGV. The Cytoplasmic segment spans residues 1309–1355; it reads LHQNSKDTSMQKTIPLVALTLTSYLGLTQPFLGLCAFLATRIFGRRS. A helical membrane pass occupies residues 1356–1376; that stretch reads IPVNEALAAAGLVGVLAGLAF. Topologically, residues 1377–1378 are lumenal; that stretch reads QE. A helical transmembrane segment spans residues 1379-1399; that stretch reads MENFLGPIAVGGILMMLVSVA. Residues 1400–1456 lie on the Cytoplasmic side of the membrane; it reads GRVDGLELKKLGEVSWEEEAEISGSSARYDVALSEQGEFKLLSEEKVPWDQVVMTSL. Residues 1407–1446 form an interacts with and activates NS3 protease region; it reads LKKLGEVSWEEEAEISGSSARYDVALSEQGEFKLLSEEKV. The helical intramembrane region spans 1457-1477; it reads ALVGAAIHPSALLLVLAGWLF. Residues 1478 to 2157 lie on the Cytoplasmic side of the membrane; sequence HVKGARRSGD…RNALSMMPEA (680 aa). One can recognise a Peptidase S7 domain in the interval 1485–1665; sequence SGDVLWDIPT…EVKEEGKEEL (181 aa). Active-site charge relay system; for serine protease NS3 activity residues include H1537, D1561, and S1622. One can recognise a Helicase ATP-binding domain in the interval 1669 to 1825; that stretch reads PTMLKKGMTT…HSNGEIEDVQ (157 aa). The important for RNA-binding stretch occupies residues 1673–1676; that stretch reads KKGM. Residue 1682–1689 coordinates ATP; it reads YHPGAGKT. The DEAH box motif lies at 1773 to 1776; it reads DEAH. Positions 1820-1997 constitute a Helicase C-terminal domain; it reads EIEDVQTDIP…VRGGMVAPLY (178 aa). At K1877 the chain carries N6-acetyllysine; by host. A helical transmembrane segment spans residues 2158-2178; it reads MTIVMLFILAGLLTSGMVIFF. The Lumenal segment spans residues 2179–2186; it reads MSPKGISR. An intramembrane region (helical) is located at residues 2187-2207; sequence MSMAMGTMAGCGYLMFLGGAK. At 2208 to 2209 the chain is on the lumenal side; it reads PT. Residues 2210–2230 form a helical membrane-spanning segment; that stretch reads HISYIMLIFFVLMVVVIPEPG. Residues 2231–2241 are Cytoplasmic-facing; that stretch reads QQRSIQDNQVA. The chain crosses the membrane as a helical span at residues 2242-2262; that stretch reads YLIIGILTLVSVVAANELGML. At 2263-2293 the chain is on the lumenal side; that stretch reads ERTKEDLFGKKNLIPSSASPWSWPDLDLKPG. Positions 2294 to 2314 form an intramembrane region, helical; that stretch reads AAWTVYVGIVTILSPMLHHWI. Over 2315 to 2360 the chain is Lumenal; that stretch reads KVEYGNLSLSGIAQSASVLSFMDKGIPFMKMNISVIILLVSGWNSI. The chain crosses the membrane as a helical span at residues 2361-2380; the sequence is TVMPLLCGIGCAMLHWTLIL. At 2381–2421 the chain is on the cytoplasmic side; that stretch reads PGIKAQQSKLPQRRVFHGVAKNPVVDGNPTVDIEEAPEMPA. The chain crosses the membrane as a helical span at residues 2422 to 2442; it reads LYEKKLALYLLLALSLASVAM. The Lumenal segment spans residues 2443–2445; sequence CRT. Residues 2446–2466 form a helical membrane-spanning segment; the sequence is PFSLAEGIVLASAALGPLIEG. The Cytoplasmic portion of the chain corresponds to 2467-3411; it reads NTSLLWNGPM…DADLQPGELI (945 aa). In terms of domain architecture, mRNA cap 0-1 NS5-type MT spans 2507 to 2771; that stretch reads GRANGKTLGE…DVILPIGTRS (265 aa). S2562 is a binding site for S-adenosyl-L-methionine. A Phosphoserine modification is found at S2562. K2567 (for 2'-O-MTase activity) is an active-site residue. The S-adenosyl-L-methionine site is built by G2592, W2593, T2610, L2611, D2637, and I2638. Catalysis depends on D2652, which acts as the For 2'-O-MTase activity. I2653 is an S-adenosyl-L-methionine binding site. Active-site for 2'-O-MTase activity residues include K2688 and E2724. Y2726 is a binding site for S-adenosyl-L-methionine. A Nuclear localization signal motif is present at residues 2878-2911; sequence RKIMKVVNRWLFRHLAREKNPRLCTKEEFIAKVR. Zn(2+)-binding residues include E2945, H2949, C2954, and C2957. In terms of domain architecture, RdRp catalytic spans 3035 to 3187; the sequence is GGFYADDTAG…RPIDDRFGMA (153 aa). Zn(2+)-binding residues include H3222, C3238, and C3357.

In the N-terminal section; belongs to the class I-like SAM-binding methyltransferase superfamily. mRNA cap 0-1 NS5-type methyltransferase family. Homodimer. Interacts (via N-terminus) with host EXOC1 (via C-terminus); this interaction results in EXOC1 degradation through the proteasome degradation pathway. As to quaternary structure, forms heterodimers with envelope protein E in the endoplasmic reticulum and Golgi. In terms of assembly, homodimer; in the endoplasmic reticulum and Golgi. Interacts with protein prM. Interacts with non-structural protein 1. Homodimer; Homohexamer when secreted. Interacts with envelope protein E. As to quaternary structure, interacts (via N-terminus) with serine protease NS3. In terms of assembly, forms a heterodimer with serine protease NS3. May form homooligomers. Forms a heterodimer with NS2B. Interacts with non-structural protein 2A (via N-terminus). Interacts with NS4B. Interacts with unphosphorylated RNA-directed RNA polymerase NS5; this interaction stimulates RNA-directed RNA polymerase NS5 guanylyltransferase activity. NS3 interacts with host PDCD6IP; this interaction contributes to virion release. As to quaternary structure, interacts with serine protease NS3. In terms of assembly, homodimer. Interacts with host STAT2; this interaction prevents the establishment of cellular antiviral state. Interacts with serine protease NS3. Interacts with host TRIM23; this interaction leads to NS5 ubiquitination. Specific enzymatic cleavages in vivo yield mature proteins. The nascent capsid protein C contains a C-terminal hydrophobic domain that act as a signal sequence for translocation of prM into the lumen of the ER. Mature capsid protein C is cleaved at a site upstream of this hydrophobic domain by NS3. prM is cleaved in post-Golgi vesicles by a host furin, releasing the mature small envelope protein M, and peptide pr. Non-structural protein 2A-alpha, a C-terminally truncated form of non-structural protein 2A, results from partial cleavage by NS3. Specific enzymatic cleavages in vivo yield mature proteins peptide 2K acts as a signal sequence and is removed from the N-terminus of NS4B by the host signal peptidase in the ER lumen. Signal cleavage at the 2K-4B site requires a prior NS3 protease-mediated cleavage at the 4A-2K site. Post-translationally, cleaved in post-Golgi vesicles by a host furin, releasing the mature small envelope protein M, and peptide pr. This cleavage is incomplete as up to 30% of viral particles still carry uncleaved prM. In terms of processing, N-glycosylated. N-glycosylated. The excreted form is glycosylated and this is required for efficient secretion of the protein from infected cells. Post-translationally, polyubiquitinated; ubiquitination is probably mediated by host TRIM23 and is prerequisite for NS5-STAT2 interaction. NS5 is not ISGylated or sumoylated. In terms of processing, acetylated by host KAT5. Acetylation modulates NS3 RNA-binding and unwinding activities and plays an important positive role for viral replication. Phosphorylated on serines residues. This phosphorylation may trigger NS5 nuclear localization.

It localises to the virion. The protein localises to the host nucleus. The protein resides in the host cytoplasm. Its subcellular location is the host perinuclear region. It is found in the secreted. It localises to the virion membrane. The protein localises to the host endoplasmic reticulum membrane. The enzyme catalyses Selective hydrolysis of -Xaa-Xaa-|-Yaa- bonds in which each of the Xaa can be either Arg or Lys and Yaa can be either Ser or Ala.. It carries out the reaction RNA(n) + a ribonucleoside 5'-triphosphate = RNA(n+1) + diphosphate. The catalysed reaction is a ribonucleoside 5'-triphosphate + H2O = a ribonucleoside 5'-diphosphate + phosphate + H(+). It catalyses the reaction ATP + H2O = ADP + phosphate + H(+). The enzyme catalyses a 5'-end (5'-triphosphoguanosine)-ribonucleoside in mRNA + S-adenosyl-L-methionine = a 5'-end (N(7)-methyl 5'-triphosphoguanosine)-ribonucleoside in mRNA + S-adenosyl-L-homocysteine. It carries out the reaction a 5'-end (N(7)-methyl 5'-triphosphoguanosine)-ribonucleoside in mRNA + S-adenosyl-L-methionine = a 5'-end (N(7)-methyl 5'-triphosphoguanosine)-(2'-O-methyl-ribonucleoside) in mRNA + S-adenosyl-L-homocysteine + H(+). In terms of biological role, plays a role in virus budding by binding to the cell membrane and gathering the viral RNA into a nucleocapsid that forms the core of a mature virus particle. During virus entry, may induce genome penetration into the host cytoplasm after hemifusion induced by the surface proteins. Can migrate to the cell nucleus where it modulates host functions. Its function is as follows. Inhibits RNA silencing by interfering with host Dicer. Prevents premature fusion activity of envelope proteins in trans-Golgi by binding to envelope protein E at pH6.0. After virion release in extracellular space, gets dissociated from E dimers. Functionally, acts as a chaperone for envelope protein E during intracellular virion assembly by masking and inactivating envelope protein E fusion peptide. prM is the only viral peptide matured by host furin in the trans-Golgi network probably to avoid catastrophic activation of the viral fusion activity in acidic Golgi compartment prior to virion release. prM-E cleavage is inefficient, and many virions are only partially matured. These uncleaved prM would play a role in immune evasion. In terms of biological role, may play a role in virus budding. Exerts cytotoxic effects by activating a mitochondrial apoptotic pathway through M ectodomain. May display a viroporin activity. Its function is as follows. Binds to host cell surface receptor and mediates fusion between viral and cellular membranes. Envelope protein is synthesized in the endoplasmic reticulum in the form of heterodimer with protein prM. They play a role in virion budding in the ER, and the newly formed immature particle is covered with 60 spikes composed of heterodimer between precursor prM and envelope protein E. The virion is transported to the Golgi apparatus where the low pH causes dissociation of PrM-E heterodimers and formation of E homodimers. prM-E cleavage is inefficient, and many virions are only partially matured. These uncleaved prM would play a role in immune evasion. Involved in immune evasion, pathogenesis and viral replication. Once cleaved off the polyprotein, is targeted to three destinations: the viral replication cycle, the plasma membrane and the extracellular compartment. Essential for viral replication. Required for formation of the replication complex and recruitment of other non-structural proteins to the ER-derived membrane structures. Excreted as a hexameric lipoparticle that plays a role against host immune response. Antagonizing the complement function. Binds to the host macrophages and dendritic cells. Inhibits signal transduction originating from Toll-like receptor 3 (TLR3). Functionally, component of the viral RNA replication complex that functions in virion assembly and antagonizes the host immune response. In terms of biological role, required cofactor for the serine protease function of NS3. May have membrane-destabilizing activity and form viroporins. Its function is as follows. Displays three enzymatic activities: serine protease, NTPase and RNA helicase. NS3 serine protease, in association with NS2B, performs its autocleavage and cleaves the polyprotein at dibasic sites in the cytoplasm: C-prM, NS2A-NS2B, NS2B-NS3, NS3-NS4A, NS4A-2K and NS4B-NS5. NS3 RNA helicase binds RNA and unwinds dsRNA in the 3' to 5' direction. Also plays a role in virus assembly. Regulates the ATPase activity of the NS3 helicase activity. NS4A allows NS3 helicase to conserve energy during unwinding. Functionally, functions as a signal peptide for NS4B and is required for the interferon antagonism activity of the latter. In terms of biological role, induces the formation of ER-derived membrane vesicles where the viral replication takes place. Inhibits interferon (IFN)-induced host STAT1 phosphorylation and nuclear translocation, thereby preventing the establishment of cellular antiviral state by blocking the IFN-alpha/beta pathway. Its function is as follows. Replicates the viral (+) and (-) RNA genome, and performs the capping of genomes in the cytoplasm. NS5 methylates viral RNA cap at guanine N-7 and ribose 2'-O positions. Besides its role in RNA genome replication, also prevents the establishment of cellular antiviral state by blocking the interferon-alpha/beta (IFN-alpha/beta) signaling pathway. IFN-I induces binding of NS5 to host IFN-activated transcription factor STAT2, preventing its transcriptional activity. Host TRIM23 is the E3 ligase that interacts with and polyubiquitinates NS5 to promote its binding to STAT2 and trigger IFN-I signaling inhibition. This chain is Genome polyprotein, found in Yellow fever virus (isolate Ivory Coast/85-82H/1982) (YFV).